The sequence spans 254 residues: Hydroxyacylglutathione hydrolase (254 aa).

7 residues coordinate Zn(2+): His-54, His-56, Asp-58, His-59, His-111, Asp-130, and His-168.

The protein belongs to the metallo-beta-lactamase superfamily. Glyoxalase II family. Monomer. The cofactor is Zn(2+).

The catalysed reaction is an S-(2-hydroxyacyl)glutathione + H2O = a 2-hydroxy carboxylate + glutathione + H(+). It participates in secondary metabolite metabolism; methylglyoxal degradation; (R)-lactate from methylglyoxal: step 2/2. Functionally, thiolesterase that catalyzes the hydrolysis of S-D-lactoyl-glutathione to form glutathione and D-lactic acid. This chain is Hydroxyacylglutathione hydrolase, found in Legionella pneumophila (strain Corby).